Reading from the N-terminus, the 112-residue chain is Large ribosomal subunit protein uL24 (112 aa).

Belongs to the universal ribosomal protein uL24 family. In terms of assembly, part of the 50S ribosomal subunit.

One of two assembly initiator proteins, it binds directly to the 5'-end of the 23S rRNA, where it nucleates assembly of the 50S subunit. In terms of biological role, one of the proteins that surrounds the polypeptide exit tunnel on the outside of the subunit. This is Large ribosomal subunit protein uL24 from Desulfitobacterium hafniense (strain Y51).